A 185-amino-acid chain; its full sequence is Putative manganese efflux pump MntP (185 aa).

6 consecutive transmembrane segments (helical) span residues 4–24 (LTSS…ALAI), 36–56 (ALVI…AGWI), 65–85 (ISSY…IKMI), 105–125 (VILL…SFGV), 130–150 (VLMP…AGVF), and 165–185 (IFGG…ILPL).

The protein belongs to the MntP (TC 9.B.29) family.

The protein localises to the cell membrane. Its function is as follows. Probably functions as a manganese efflux pump. The polypeptide is Putative manganese efflux pump MntP (Methanoregula boonei (strain DSM 21154 / JCM 14090 / 6A8)).